Consider the following 126-residue polypeptide: Putative phosphotransferase enzyme IIB component UU178 (126 aa).

A helical membrane pass occupies residues 11–31; it reads LIIFLGIITFGIFIIYFFTKA. The PTS EIIB type-1 domain occupies 49–126; sequence PFSLNDFYNC…KELIKKDLFS (78 aa).

To M.genitalium MG129 and M.pneumoniae MPN268.

It localises to the membrane. Functionally, the phosphoenolpyruvate-dependent sugar phosphotransferase system (PTS), a major carbohydrate active -transport system, catalyzes the phosphorylation of incoming sugar substrates concomitant with their translocation across the cell membrane. This Ureaplasma parvum serovar 3 (strain ATCC 700970) protein is Putative phosphotransferase enzyme IIB component UU178.